The primary structure comprises 800 residues: Nucleolar complex protein 3 homolog (800 aa).

2 disordered regions span residues lysine 27–aspartate 93 and glycine 160–glutamate 187. The span at lysine 40 to glutamine 51 shows a compositional bias: basic residues. A compositionally biased stretch (basic and acidic residues) spans asparagine 66–arginine 78. Over residues glutamate 79–aspartate 93 the composition is skewed to acidic residues. Positions glycine 160–asparagine 174 are enriched in basic and acidic residues. Residues lysine 175–glutamate 187 show a composition bias toward acidic residues. Lysine 333 participates in a covalent cross-link: Glycyl lysine isopeptide (Lys-Gly) (interchain with G-Cter in SUMO2). Residues lysine 451–leucine 490 adopt a coiled-coil conformation. Serine 787 carries the post-translational modification Phosphoserine.

The protein belongs to the CBF/MAK21 family. In terms of tissue distribution, expressed in colon, heart, kidney, liver, lung, placenta, skeletal muscle, small intestine, spleen and thymus.

It localises to the nucleus. Its subcellular location is the nucleolus. It is found in the nucleus speckle. May be required for adipogenesis. This Homo sapiens (Human) protein is Nucleolar complex protein 3 homolog (NOC3L).